The sequence spans 100 residues: Aspartyl/glutamyl-tRNA(Asn/Gln) amidotransferase subunit C (100 aa).

The protein belongs to the GatC family. As to quaternary structure, heterotrimer of A, B and C subunits.

It catalyses the reaction L-glutamyl-tRNA(Gln) + L-glutamine + ATP + H2O = L-glutaminyl-tRNA(Gln) + L-glutamate + ADP + phosphate + H(+). It carries out the reaction L-aspartyl-tRNA(Asn) + L-glutamine + ATP + H2O = L-asparaginyl-tRNA(Asn) + L-glutamate + ADP + phosphate + 2 H(+). Functionally, allows the formation of correctly charged Asn-tRNA(Asn) or Gln-tRNA(Gln) through the transamidation of misacylated Asp-tRNA(Asn) or Glu-tRNA(Gln) in organisms which lack either or both of asparaginyl-tRNA or glutaminyl-tRNA synthetases. The reaction takes place in the presence of glutamine and ATP through an activated phospho-Asp-tRNA(Asn) or phospho-Glu-tRNA(Gln). The chain is Aspartyl/glutamyl-tRNA(Asn/Gln) amidotransferase subunit C from Staphylococcus aureus (strain Newman).